We begin with the raw amino-acid sequence, 191 residues long: Protein GrpE (191 aa).

The segment covering 1-19 has biased composition (basic and acidic residues); it reads MKDEHNQKHDHLSQKEPES. Residues 1–44 are disordered; that stretch reads MKDEHNQKHDHLSQKEPESYQKACACKEQQDEEMQEAGEKEGEI.

This sequence belongs to the GrpE family. Homodimer.

Its subcellular location is the cytoplasm. Participates actively in the response to hyperosmotic and heat shock by preventing the aggregation of stress-denatured proteins, in association with DnaK and GrpE. It is the nucleotide exchange factor for DnaK and may function as a thermosensor. Unfolded proteins bind initially to DnaJ; upon interaction with the DnaJ-bound protein, DnaK hydrolyzes its bound ATP, resulting in the formation of a stable complex. GrpE releases ADP from DnaK; ATP binding to DnaK triggers the release of the substrate protein, thus completing the reaction cycle. Several rounds of ATP-dependent interactions between DnaJ, DnaK and GrpE are required for fully efficient folding. This chain is Protein GrpE, found in Helicobacter pylori (strain G27).